A 594-amino-acid chain; its full sequence is Glomulin (594 aa).

Residue alanine 2 is modified to N-acetylalanine. The alpha-helical region with structural similarity to HEAT repeats stretch occupies residues alanine 2–methionine 553. The interval isoleucine 300–lysine 594 is important for interaction with RBX1.

As to quaternary structure, interacts with FKBP4 and FKBP1A. Isoform 1: Interacts with RBX1 (via RING domain). Identified in complexes that contain RBX1 plus one of the cullins CUL1, CUL2, CUL3, and CUL4A. Identified in a SCF complex composed of CUL1, RBX1, SKP1, FBXW7 and GLMN. Component of a SCF-like complex consisting of CUL7, RBX1, SKP1, FBXW8 and GLMN. Interacts with unphosphorylated MET and is released upon MET phosphorylation. Post-translationally, phosphorylated on tyrosine residues. In terms of tissue distribution, ubiquitous.

In terms of biological role, regulatory component of cullin-RING-based SCF (SKP1-Cullin-F-box protein) E3 ubiquitin-protein ligase complexes. Inhibits E3 ubiquitin ligase activity by binding to RBX1 (via RING domain) and inhibiting its interaction with the E2 ubiquitin-conjugating enzyme CDC34. Inhibits RBX1-mediated neddylation of CUL1. Required for normal stability and normal cellular levels of key components of SCF ubiquitin ligase complexes, including FBXW7, RBX1, CUL1, CUL2, CUL3, CUL4A, and thereby contributes to the regulation of CCNE1 and MYC levels. Essential for normal development of the vasculature. Contributes to the regulation of RPS6KB1 phosphorylation. The sequence is that of Glomulin (GLMN) from Homo sapiens (Human).